A 950-amino-acid chain; its full sequence is Synaptotagmin-like protein 2 (950 aa).

In terms of domain architecture, RabBD spans 1 to 57 (MIDLSFLTEEEQDAILKVLQRDAALKRAEEERVRHLPEKIKDDQQLKNMSGQWFYEA). Disordered regions lie at residues 78–98 (RKKLPAAAEQNKDTAMRAKES), 116–289 (VEEP…ETLR), and 361–620 (ESDQ…SSSG). Residues 87-97 (QNKDTAMRAKE) are compositionally biased toward basic and acidic residues. Composition is skewed to polar residues over residues 140–150 (IDMSQESTRTP) and 173–183 (LQQTKPEQSKT). The span at 193-205 (KEGELSESKEKSS) shows a compositional bias: basic and acidic residues. Polar residues predominate over residues 219–230 (QTVSTEPENASH). A compositionally biased stretch (basic and acidic residues) spans 246 to 264 (NDLEKDDNQSFPRQRRDSL). Positions 434-445 (VESSSVINGQQE) are enriched in polar residues. Composition is skewed to basic and acidic residues over residues 479 to 502 (HSFRDHRQGSEEEHSPVLKTLERR) and 531 to 544 (ELVRSAEDDQKADQ). Positions 557–567 (TVPSLPDNQFS) are enriched in polar residues. Residues 608-620 (SPSSLTNLSSSSG) are compositionally biased toward low complexity. C2 domains follow at residues 644-769 (VKGS…LKWY) and 784-913 (NRGE…VDWM).

In terms of assembly, monomer. Binds NRXN1. Binds RAB27A that has been activated by GTP-binding. Interacts with RAB27B. In terms of processing, isoform 1 is highly susceptible to proteolytic degradation and is stabilized by the interaction with RAB27A. As to expression, highly expressed in brain, lung, kidney, testis and in embryos after day 7. Detected at lower levels in skeletal muscle. Expressed in pancreatic alpha cells. Isoform 6 is highly expressed in brain, but not detectable in the other tissues tested. Isoform 1 is expressed abundantly in the stomach and is predominantly localized at the apical region of gastric-surface mucus cells. Isoform 11 is expressed in cytotoxic T-lymphocytes (CTL).

It is found in the melanosome membrane. It localises to the cell membrane. Isoform 11 acts as a RAB27A effector protein and plays a role in cytotoxic granule exocytosis in lymphocytes. Required for cytotoxic granule docking at the immunologic synapse. Isoform 1 may play a role in melanosome transport and vesicle trafficking. It controls melanosome distribution in the cell periphery and regulates melanocyte morphology. Isoform 1 acts as a positive mediator of mucus secretion by the surface mucus cells of the stomach. Mediates basal mucus secretion by gastric surface cells by promoting the proper granule biognesis and docking of mucus granules with the apical plasma membrane. This chain is Synaptotagmin-like protein 2 (Sytl2), found in Mus musculus (Mouse).